Here is a 415-residue protein sequence, read N- to C-terminus: Protein ROH1A (415 aa).

The interval 184 to 219 is disordered; it reads VSGGGGGGGGGNKTTERSWSFGRRSGGSSAASKGGA. The segment covering 185 to 195 has biased composition (gly residues); sequence SGGGGGGGGGN. Residues 200–219 are compositionally biased toward low complexity; sequence RSWSFGRRSGGSSAASKGGA. A helical transmembrane segment spans residues 263 to 283; that stretch reads MFIMSTVMVFVMWVLTAAVPC.

This sequence belongs to the ROH1 family. As to quaternary structure, interacts with EXO70A1 and EXO70C1. Binds to EXO70C2. In terms of tissue distribution, mainly expressed in cells expanding in a polar manner such as pollen and root hairs.

The protein resides in the membrane. The protein localises to the cytoplasm. It is found in the cytosol. Its function is as follows. Required for seed coat mucilage deposition. This Arabidopsis thaliana (Mouse-ear cress) protein is Protein ROH1A.